We begin with the raw amino-acid sequence, 429 residues long: Aspartate--tRNA(Asp/Asn) ligase (429 aa).

Residue E167 participates in L-aspartate binding. The aspartate stretch occupies residues 189-192; the sequence is QLYK. L-aspartate is bound at residue R210. Residues 210 to 212 and E352 contribute to the ATP site; that span reads RAE. Mg(2+) contacts are provided by E352 and S355. Positions 355 and 359 each coordinate L-aspartate. Residue 400–403 participates in ATP binding; sequence GLAR.

This sequence belongs to the class-II aminoacyl-tRNA synthetase family. Type 2 subfamily. Homodimer. The cofactor is Mg(2+).

It is found in the cytoplasm. The catalysed reaction is tRNA(Asx) + L-aspartate + ATP = L-aspartyl-tRNA(Asx) + AMP + diphosphate. Functionally, aspartyl-tRNA synthetase with relaxed tRNA specificity since it is able to aspartylate not only its cognate tRNA(Asp) but also tRNA(Asn). Reaction proceeds in two steps: L-aspartate is first activated by ATP to form Asp-AMP and then transferred to the acceptor end of tRNA(Asp/Asn). This Sulfurisphaera tokodaii (strain DSM 16993 / JCM 10545 / NBRC 100140 / 7) (Sulfolobus tokodaii) protein is Aspartate--tRNA(Asp/Asn) ligase.